Here is a 373-residue protein sequence, read N- to C-terminus: 3-isopropylmalate dehydrogenase (373 aa).

82-93 (GPKWGTGALRPE) provides a ligand contact to NAD(+). Substrate is bound by residues arginine 100, arginine 110, arginine 139, and aspartate 231. Mg(2+) contacts are provided by aspartate 231, aspartate 256, and aspartate 260. 295-306 (GSAPDLPANKVN) is a binding site for NAD(+).

The protein belongs to the isocitrate and isopropylmalate dehydrogenases family. Homodimer. Mg(2+) serves as cofactor. Requires Mn(2+) as cofactor.

The protein resides in the cytoplasm. It carries out the reaction (2R,3S)-3-isopropylmalate + NAD(+) = 4-methyl-2-oxopentanoate + CO2 + NADH. It participates in amino-acid biosynthesis; L-leucine biosynthesis; L-leucine from 3-methyl-2-oxobutanoate: step 3/4. Its function is as follows. Catalyzes the oxidation of 3-carboxy-2-hydroxy-4-methylpentanoate (3-isopropylmalate) to 3-carboxy-4-methyl-2-oxopentanoate. The product decarboxylates to 4-methyl-2 oxopentanoate. In Candida maltosa (Yeast), this protein is 3-isopropylmalate dehydrogenase (LEU2).